The chain runs to 469 residues: Spermatogenesis-associated protein 21 (469 aa).

Disordered stretches follow at residues methionine 1–glutamine 76 and histidine 99–proline 157. The span at glutamate 49 to arginine 61 shows a compositional bias: basic and acidic residues. The span at alanine 62–alanine 73 shows a compositional bias: low complexity. Positions alanine 105–alanine 132 are enriched in polar residues. The segment covering alanine 146–proline 157 has biased composition (pro residues). Positions glutamate 198–alanine 225 form a coiled coil. The 36-residue stretch at valine 255–phenylalanine 290 folds into the EF-hand domain. Ca(2+) contacts are provided by aspartate 268, asparagine 270, aspartate 272, arginine 274, and aspartate 279. The segment at tyrosine 424–histidine 469 is disordered. Residues asparagine 450 to lysine 459 are compositionally biased toward basic and acidic residues.

Its function is as follows. Involved in the differentiation of haploid spermatids. The sequence is that of Spermatogenesis-associated protein 21 (SPATA21) from Homo sapiens (Human).